We begin with the raw amino-acid sequence, 668 residues long: Golgin candidate 2 (668 aa).

The segment at Gln-22–Arg-317 is disordered. A compositionally biased stretch (basic and acidic residues) spans Ser-26–Val-39. Polar residues-rich tracts occupy residues Gly-64–Ser-86 and Ser-100–Leu-113. 2 stretches are compositionally biased toward low complexity: residues Ser-123–Ser-141 and Ser-168–Gly-178. Basic and acidic residues-rich tracts occupy residues Thr-184–Pro-207, Thr-215–Ala-237, and Gly-250–Arg-259. Residues Asp-290–Thr-302 show a composition bias toward acidic residues. Residues Asp-303–Glu-312 show a composition bias toward basic and acidic residues. A coiled-coil region spans residues Ala-331 to Lys-539. The next 2 membrane-spanning stretches (helical) occupy residues Lys-594–Leu-614 and Ile-622–His-642.

It localises to the golgi apparatus membrane. Functionally, golgi matrix protein playing a role in tethering of vesicles to Golgi membranes and in maintaining the overall structure of the Golgi apparatus. In Arabidopsis thaliana (Mouse-ear cress), this protein is Golgin candidate 2 (GC2).